The primary structure comprises 56 residues: Large ribosomal subunit protein bL33 (56 aa).

Belongs to the bacterial ribosomal protein bL33 family.

In Anaplasma phagocytophilum (strain HZ), this protein is Large ribosomal subunit protein bL33.